The sequence spans 198 residues: Probable GTP-binding protein EngB (198 aa).

Residues 22 to 195 (DLPEIALAGR…WKAIHKMTKT (174 aa)) enclose the EngB-type G domain. Residues 30–37 (GRSNVGKS), 57–61 (GKTQT), 75–78 (DVPG), 142–145 (TKAD), and 174–176 (FSS) each bind GTP. Residues Ser-37 and Thr-59 each coordinate Mg(2+).

Belongs to the TRAFAC class TrmE-Era-EngA-EngB-Septin-like GTPase superfamily. EngB GTPase family. The cofactor is Mg(2+).

In terms of biological role, necessary for normal cell division and for the maintenance of normal septation. The chain is Probable GTP-binding protein EngB from Bacillus cereus (strain G9842).